A 292-amino-acid chain; its full sequence is Acetylglutamate kinase (292 aa).

Residues 64–65 (GG), R86, and N190 contribute to the substrate site.

This sequence belongs to the acetylglutamate kinase family. ArgB subfamily.

It is found in the cytoplasm. It catalyses the reaction N-acetyl-L-glutamate + ATP = N-acetyl-L-glutamyl 5-phosphate + ADP. It functions in the pathway amino-acid biosynthesis; L-arginine biosynthesis; N(2)-acetyl-L-ornithine from L-glutamate: step 2/4. Functionally, catalyzes the ATP-dependent phosphorylation of N-acetyl-L-glutamate. This is Acetylglutamate kinase from Pelobacter propionicus (strain DSM 2379 / NBRC 103807 / OttBd1).